We begin with the raw amino-acid sequence, 42 residues long: Photosystem I reaction center subunit IX (42 aa).

The chain crosses the membrane as a helical span at residues 7 to 27; sequence YLSTAPVIATIWFGFLAGLLI.

The protein belongs to the PsaJ family.

It localises to the plastid. Its subcellular location is the chloroplast thylakoid membrane. Its function is as follows. May help in the organization of the PsaE and PsaF subunits. In Chaetosphaeridium globosum (Charophycean green alga), this protein is Photosystem I reaction center subunit IX.